The chain runs to 1191 residues: uncharacterized protein (1191 aa).

WD repeat units lie at residues 558 to 588 (GHRD…HLWT), 599 to 629 (GHTG…KIWD), 640 to 670 (GHQD…RLWH), 682 to 712 (GHTK…RLWD), 723 to 753 (LPEV…RLWT), 764 to 794 (GHDE…IHWS), 805 to 835 (GYPE…KVWD), 995 to 1025 (QRKE…TLWN), 1036 to 1066 (AHGD…KIWS), 1077 to 1107 (SDPL…RLWD), and 1118 to 1148 (STSG…QSWP).

This is an uncharacterized protein from Synechocystis sp. (strain ATCC 27184 / PCC 6803 / Kazusa).